The sequence spans 60 residues: Large ribosomal subunit protein bL32 (60 aa).

The span at 1-16 (MAVPRRKTSPSRRGMR) shows a compositional bias: basic residues. Residues 1-60 (MAVPRRKTSPSRRGMRRSADAIKRPTYVEDKDSGELRRPHHLDLKTGMYKGRQVLKKKDS) are disordered. The segment covering 17-44 (RSADAIKRPTYVEDKDSGELRRPHHLDL) has biased composition (basic and acidic residues).

This is Large ribosomal subunit protein bL32 from Rhodopseudomonas palustris (strain ATCC BAA-98 / CGA009).